Consider the following 2073-residue polypeptide: Dedicator of cytokinesis protein 11 (2073 aa).

S12 carries the phosphoserine modification. T16 is subject to Phosphothreonine. A phosphoserine mark is found at S23 and S161. In terms of domain architecture, PH spans G165–Q272. Y248 carries the post-translational modification Phosphotyrosine. Phosphoserine occurs at positions 306, 440, and 445. In terms of domain architecture, C2 DOCK-type spans K640–E818. The interval F1226–S1267 is disordered. S1237 and S1240 each carry phosphoserine. In terms of domain architecture, DOCKER spans K1609–L2036.

The protein belongs to the DOCK family. As to quaternary structure, interacts with CDC42.

Its function is as follows. Guanine nucleotide-exchange factor (GEF) that activates CDC42 by exchanging bound GDP for free GTP. Required for marginal zone (MZ) B-cell development, is associated with early bone marrow B-cell development, MZ B-cell formation, MZ B-cell number and marginal metallophilic macrophages morphology. Facilitates filopodia formation through the activation of CDC42. The sequence is that of Dedicator of cytokinesis protein 11 from Homo sapiens (Human).